The following is a 359-amino-acid chain: HTH-type transcriptional regulator Rv3575c (359 aa).

The region spanning 9–64 (ATLASLAAELKVSRTTVSNAFNRPDQLSADLRERVLATAKRLGYAGPDPVARSLRT) is the HTH lacI-type domain. The H-T-H motif DNA-binding region spans 11–30 (LASLAAELKVSRTTVSNAFN).

Its function is as follows. Transcriptional regulator that negatively regulates transcription of the mce4 operon, which is involved in cholesterol transport and utilization. Acts by binding to the promoter region of the mce4 operon. It affects the utilization of host cholesterol as a carbon source, impacting the host's innate immune response. The polypeptide is HTH-type transcriptional regulator Rv3575c (Mycobacterium tuberculosis (strain ATCC 25618 / H37Rv)).